A 405-amino-acid polypeptide reads, in one-letter code: Deoxyguanosinetriphosphate triphosphohydrolase-like protein (405 aa).

The HD domain occupies 75–219; sequence RLTHTIEVAQ…AAIADDIAYN (145 aa).

Belongs to the dGTPase family. Type 2 subfamily.

The sequence is that of Deoxyguanosinetriphosphate triphosphohydrolase-like protein from Sinorhizobium medicae (strain WSM419) (Ensifer medicae).